A 189-amino-acid chain; its full sequence is Apolipoprotein D (189 aa).

Positions 1 to 21 are cleaved as a signal peptide; sequence MAPTLLLLLPALAGLISVAQG. Pyrrolidone carboxylic acid is present on glutamine 22. Intrachain disulfides connect cysteine 29–cysteine 135 and cysteine 62–cysteine 186. N-linked (GlcNAc...) asparagine glycosylation is found at asparagine 66 and asparagine 99.

This sequence belongs to the calycin superfamily. Lipocalin family. As to quaternary structure, homodimer. Most heavily expressed in adrenal gland, lung, brain, testis and spleen.

It localises to the secreted. APOD occurs in the macromolecular complex with lecithin-transport and binding of bilin. Appears to be able to transport a variety of ligands in a number of different contexts. The sequence is that of Apolipoprotein D (APOD) from Oryctolagus cuniculus (Rabbit).